The primary structure comprises 149 residues: Transcriptional repressor NrdR (149 aa).

The segment at 3-34 (CPFCGFEESKVVDSRSTDDNTTIRRRRECLKC) is a zinc-finger region. Residues 49–139 (ILVIKKDLTR…VYRQFKDIDT (91 aa)) form the ATP-cone domain.

It belongs to the NrdR family. The cofactor is Zn(2+).

Negatively regulates transcription of bacterial ribonucleotide reductase nrd genes and operons by binding to NrdR-boxes. This chain is Transcriptional repressor NrdR, found in Clostridium beijerinckii (strain ATCC 51743 / NCIMB 8052) (Clostridium acetobutylicum).